A 107-amino-acid polypeptide reads, in one-letter code: Early E3A 12.5 kDa protein (107 aa).

Belongs to the adenoviridae E3A-2 family.

Functionally, not yet known. This is Early E3A 12.5 kDa protein from Human adenovirus C serotype 5 (HAdV-5).